Consider the following 466-residue polypeptide: MVDVLNIESLDLEARGIAHRDGKVLFVEGALPGERVTVQTVRRKPSYEIAKVEEILRPSSQRVAPRCPHFGVCGGCAMQHLAPAAQVAIKQRALEDTFWHVGKLKPARILPPLYGPTWGYRYRARLSVRVVPKKGGVLVGFHERKSSYVADMRECHVLPPAVSRLLLPLRAMIAAMSAPDRMPQIEVALGDEAIVLVLRHLLPLTDGDIAVLRAFAAEHGVQWWLQSKGPDTVHPLEREHADALAYTLPEFGLRMPYRPTDFTQVNHAINRAMVSRALKLLDVQPQDRVADLFCGLGNFTLPLATQGREAVGVEGSKALTDRAHEAAARHGLGERTRFATLNLFEVDVQWLRGLGYFDRMLIDPPREGAQAVAQALSLLAPGERPRRIVYVSCNPGTLARDAAIMVHEGGYALRSAGVINMFPHTGHVESIAVFESLDEATVLQAQAQARQKAREEAERLAEAAAA.

The TRAM domain occupies 1–54 (MVDVLNIESLDLEARGIAHRDGKVLFVEGALPGERVTVQTVRRKPSYEIAKVEE). [4Fe-4S] cluster-binding residues include Cys-67, Cys-73, Cys-76, and Cys-155. The S-adenosyl-L-methionine site is built by Gln-264, Phe-293, Asn-298, Glu-314, Asn-342, and Asp-363. Catalysis depends on Cys-393, which acts as the Nucleophile.

Belongs to the class I-like SAM-binding methyltransferase superfamily. RNA M5U methyltransferase family. RlmD subfamily.

It carries out the reaction uridine(1939) in 23S rRNA + S-adenosyl-L-methionine = 5-methyluridine(1939) in 23S rRNA + S-adenosyl-L-homocysteine + H(+). Catalyzes the formation of 5-methyl-uridine at position 1939 (m5U1939) in 23S rRNA. This Bordetella bronchiseptica (strain ATCC BAA-588 / NCTC 13252 / RB50) (Alcaligenes bronchisepticus) protein is 23S rRNA (uracil(1939)-C(5))-methyltransferase RlmD.